A 391-amino-acid chain; its full sequence is MGKSKFERNKPHVNIGTIGHVDHGKTSLTAAITKYFGEYKAYDQIDAAPEEKARGITISTAHVEYETPARHYAHVDCPGHADYVKNMITGAAQMDGAILVCSAADGPMPQTREHILLARQVGVPAIVVFLNKVDQVDDAELLELVELEVRELLSSYDFPGDDIPIIKGSALAALEDSDKKIGEDAIRELMAAVDAYIPTPERPINLPFLLPIEDVFSISGRGTVVTGRVERGIVKVGEEVEIVGIRPTTKTTVTGVEMFRKLLDQGQAGDNIGALIRGVTRDGVERGQILCKPGSVKPHKKFMAEAYILTKEEGGRHTPFFTNYRPQFYFRTTDVTGIVTLPEGTEMVMPGDNVTVSVELIVPIAMEEKLRFAIREGGRTVGAGIVASIVE.

Residues 10-201 (KPHVNIGTIG…AVDAYIPTPE (192 aa)) form the tr-type G domain. Residues 19–26 (GHVDHGKT) form a G1 region. GTP is bound at residue 19 to 26 (GHVDHGKT). Position 26 (threonine 26) interacts with Mg(2+). The interval 55–59 (GITIS) is G2. The segment at 76–79 (DCPG) is G3. GTP-binding positions include 76–80 (DCPGH) and 131–134 (NKVD). Residues 131–134 (NKVD) are G4. Positions 169–171 (SAL) are G5.

Belongs to the TRAFAC class translation factor GTPase superfamily. Classic translation factor GTPase family. EF-Tu/EF-1A subfamily. As to quaternary structure, monomer.

It is found in the cytoplasm. It carries out the reaction GTP + H2O = GDP + phosphate + H(+). In terms of biological role, GTP hydrolase that promotes the GTP-dependent binding of aminoacyl-tRNA to the A-site of ribosomes during protein biosynthesis. The chain is Elongation factor Tu from Rhizobium johnstonii (strain DSM 114642 / LMG 32736 / 3841) (Rhizobium leguminosarum bv. viciae).